A 151-amino-acid chain; its full sequence is Lipoprotein signal peptidase (151 aa).

2 helical membrane passes run 61-81 (GSQW…IWIG) and 88-107 (SRWQ…GNGI). Residues D117 and D133 contribute to the active site. Residues 128–148 (VFNLADVAINLAVLCLLIEAI) form a helical membrane-spanning segment.

Belongs to the peptidase A8 family.

The protein localises to the cell inner membrane. It catalyses the reaction Release of signal peptides from bacterial membrane prolipoproteins. Hydrolyzes -Xaa-Yaa-Zaa-|-(S,diacylglyceryl)Cys-, in which Xaa is hydrophobic (preferably Leu), and Yaa (Ala or Ser) and Zaa (Gly or Ala) have small, neutral side chains.. It functions in the pathway protein modification; lipoprotein biosynthesis (signal peptide cleavage). Its function is as follows. This protein specifically catalyzes the removal of signal peptides from prolipoproteins. The protein is Lipoprotein signal peptidase of Synechococcus sp. (strain RCC307).